A 294-amino-acid chain; its full sequence is 3-methyl-2-oxobutanoate hydroxymethyltransferase (294 aa).

Residues methionine 1 to proline 12 are compositionally biased toward polar residues. Residues methionine 1 to alanine 21 form a disordered region. Aspartate 69 and aspartate 112 together coordinate Mg(2+). 3-methyl-2-oxobutanoate is bound by residues aspartate 69–serine 70, aspartate 112, and lysine 141. Glutamate 143 serves as a coordination point for Mg(2+). The Proton acceptor role is filled by glutamate 210.

Belongs to the PanB family. As to quaternary structure, homodecamer; pentamer of dimers. The cofactor is Mg(2+).

It is found in the cytoplasm. It catalyses the reaction 3-methyl-2-oxobutanoate + (6R)-5,10-methylene-5,6,7,8-tetrahydrofolate + H2O = 2-dehydropantoate + (6S)-5,6,7,8-tetrahydrofolate. The protein operates within cofactor biosynthesis; (R)-pantothenate biosynthesis; (R)-pantoate from 3-methyl-2-oxobutanoate: step 1/2. Functionally, catalyzes the reversible reaction in which hydroxymethyl group from 5,10-methylenetetrahydrofolate is transferred onto alpha-ketoisovalerate to form ketopantoate. This Albidiferax ferrireducens (strain ATCC BAA-621 / DSM 15236 / T118) (Rhodoferax ferrireducens) protein is 3-methyl-2-oxobutanoate hydroxymethyltransferase.